The chain runs to 482 residues: LHPQQALAQTAGRPLADVVGKTLCTYSKTAKRQAANLAQTLQRASSAAKQSRQAQQLAALALAKLPDYKEAAATLLIYATHKIQDAQASIENWTGENTKLVGQAMYSSGRIDELMLLLEGHREDGANGQDKTCLGAAAGGNTVNEFVKTECDTESGHNIEADNSNIGQAATTLSQESTDPEASGGASCKITANLATDYDSHANELPLLGGLLTIHNAGGFKTGQSLQTAAPTNKLISALKNKGAGVAAKLATVTSAAPTSKQELKTLLASKGERAKLQAANDEYNNWKPGAKPEDFDAHIKKVFGAEDGKDSAYALALEGISIEVPQKPGTTESKQLYSMQPKDLMAALIGTIAEIQKAAATKAPCPKHKLTSAESDALCSKIKDANECNSKPFCSYNSTETDTAKKCQFNETKADKSGVSLPKTGPTGTEATTDKCKDKTKDECKSPNCKWEGETCKDSSILVTKKFALSLVSAAFASLLF.

A signal peptide spans 1 to 8 (LHPQQALA). Disulfide bonds link C24–C151 and C133–C188. N92 is a glycosylation site (N-linked (GlcNAc...) asparagine). N398 and N411 each carry an N-linked (GlcNAc...) asparagine glycan. D459 carries the GPI-anchor amidated aspartate lipid modification. Positions 460–482 (SSILVTKKFALSLVSAAFASLLF) are cleaved as a propeptide — removed in mature form.

The protein resides in the cell membrane. VSG forms a coat on the surface of the parasite. The trypanosome evades the immune response of the host by expressing a series of antigenically distinct VSGs from an estimated 1000 VSG genes. The protein is Variant surface glycoprotein ANTAT 1.1C of Trypanosoma brucei brucei.